A 366-amino-acid polypeptide reads, in one-letter code: NADH-quinone oxidoreductase subunit D (366 aa).

It belongs to the complex I 49 kDa subunit family. NDH-1 is composed of 14 different subunits. Subunits NuoB, C, D, E, F, and G constitute the peripheral sector of the complex.

The protein localises to the cell membrane. The catalysed reaction is a quinone + NADH + 5 H(+)(in) = a quinol + NAD(+) + 4 H(+)(out). Its function is as follows. NDH-1 shuttles electrons from NADH, via FMN and iron-sulfur (Fe-S) centers, to quinones in the respiratory chain. The immediate electron acceptor for the enzyme in this species is believed to be a menaquinone. Couples the redox reaction to proton translocation (for every two electrons transferred, four hydrogen ions are translocated across the cytoplasmic membrane), and thus conserves the redox energy in a proton gradient. In Bacillus thuringiensis subsp. konkukian (strain 97-27), this protein is NADH-quinone oxidoreductase subunit D.